The chain runs to 115 residues: MNTIIKNIEDAQLKAQAPEFRVGDTVRVSAKIKEGNRERIQVFEGTVLKKQGTGVRATFTVRKISNGVGVEKTWPLHSPIVEKVEVVRRGKARRAKLNYLRQRTGKAAKVKELVR.

Belongs to the bacterial ribosomal protein bL19 family.

Its function is as follows. This protein is located at the 30S-50S ribosomal subunit interface and may play a role in the structure and function of the aminoacyl-tRNA binding site. In Lachnospira eligens (strain ATCC 27750 / DSM 3376 / VPI C15-48 / C15-B4) (Eubacterium eligens), this protein is Large ribosomal subunit protein bL19.